The primary structure comprises 863 residues: MDERYDPKKIEGKWQAHWDAAGLFKVKEDPSKEKYFLMEMFPYPSGKIHMGHVRNYSIGDVVARFKRMQGFNVLHPMGWDAFGMPAENAAIKNNTHPAKWTYENIAAMGAQLKAMGFSYDWDREIATCKPDYYRWEQWLFVQMFKKGMVYRKEASVNWCHTCQTVLANEQVEQNMCWRCGDEVEQKKLKQWFFRITDYADDLLEHCDKLPGWPEKVVTMQKNWIGKSHGAEILFSVKDSDVKIKVFTTRPDTLCGATFMCLAPEHPLVEDLSKGTAQEAVVQEFVARMAKQDKAKRTADDKEKEGVPIGAQCINPLTGKTMEIYTANFALMEYGTGAVMSVPTHDQRDFEFATKYGLEKIVVIQPEGEALSPETMTEAYTDPGVLVNSGQFDGMKNTDAMEAIAQYLDENDMGKKTVQYRIRDWGISRQRYWGAPIPMIHCPDCGITPVPEDQLPVILPEDANLLEGGKSPLPELDSFVKTTCPQCGNENARRETDTMDTFVESSWYPERYCSPKCDDGMFDVDAVKYWMPVDQYIGGVEHAVMHLLYSRYFTRVLNDFGLVDFKEPFTRLLTQGMVCKETLKCPEHGWLFPHEVEGSGDERTCTKCGKIVEAGRVEKMSKSKLNVVDPEELLAKYGADTIRLFCLFAAPPERDLDWSEEGVEGSYRFLQRVWRMFAAHMDEVKDAQPFEGSPDDLDGYLKDLYKKTHQTIKKVTEDIDGRFHFNTAISAVMELVNMVYGLDDNLQGEKRAGVLRAAVEAVILLISPMTPHFTEELWSLFGKTQCVLETPWPAWREDALTADEVVVVLQVNGKLRSKLNVPLDTDDEKIKEMALADEKVQKFMGGKPIRKVIVVKNKLVNVVV.

Residues 42–52 (PYPSGKIHMGH) carry the 'HIGH' region motif. Positions 618 to 622 (KMSKS) match the 'KMSKS' region motif. Lys621 is a binding site for ATP.

It belongs to the class-I aminoacyl-tRNA synthetase family.

The protein localises to the cytoplasm. It catalyses the reaction tRNA(Leu) + L-leucine + ATP = L-leucyl-tRNA(Leu) + AMP + diphosphate. This chain is Leucine--tRNA ligase, found in Desulfatibacillum aliphaticivorans.